The sequence spans 253 residues: Proteasome subunit alpha type-7 (253 aa).

This sequence belongs to the peptidase T1A family. The 26S proteasome consists of a 20S proteasome core and two 19S regulatory subunits. The 20S proteasome core is composed of 28 subunits that are arranged in four stacked rings, resulting in a barrel-shaped structure. The two end rings are each formed by seven alpha subunits, and the two central rings are each formed by seven beta subunits. The catalytic chamber with the active sites is on the inside of the barrel.

The protein localises to the cytoplasm. Its subcellular location is the nucleus. The proteasome is a multicatalytic proteinase complex which is characterized by its ability to cleave peptides with Arg, Phe, Tyr, Leu, and Glu adjacent to the leaving group at neutral or slightly basic pH. The proteasome has an ATP-dependent proteolytic activity. The protein is Proteasome subunit alpha type-7 (pas-4) of Caenorhabditis elegans.